A 287-amino-acid chain; its full sequence is GTPase Era (287 aa).

One can recognise an Era-type G domain in the interval 6 to 178 (FSGTSVIIGK…IQNKLKIVPK (173 aa)). Positions 14-21 (GKPNVGKS) are G1. 14 to 21 (GKPNVGKS) is a GTP binding site. The segment at 40–44 (HTTQS) is G2. Positions 62 to 65 (DTPG) are G3. Residues 62–66 (DTPGI) and 124–127 (NKID) each bind GTP. The interval 124 to 127 (NKID) is G4. Positions 154–156 (ISG) are G5. In terms of domain architecture, KH type-2 spans 207-282 (LGDELPYSIQ…SIYLSLKVIK (76 aa)).

This sequence belongs to the TRAFAC class TrmE-Era-EngA-EngB-Septin-like GTPase superfamily. Era GTPase family. In terms of assembly, monomer.

It is found in the cytoplasm. The protein resides in the cell membrane. In terms of biological role, an essential GTPase that binds both GDP and GTP, with rapid nucleotide exchange. Plays a role in 16S rRNA processing and 30S ribosomal subunit biogenesis and possibly also in cell cycle regulation and energy metabolism. The sequence is that of GTPase Era from Buchnera aphidicola subsp. Baizongia pistaciae (strain Bp).